We begin with the raw amino-acid sequence, 467 residues long: Cysteine protease ATG4a (467 aa).

Residues 1-35 (MKALCDRFVPQQCSSSSKSDTHDKSPLVSDSGPSD) form a disordered region. The active-site Nucleophile is cysteine 170. Catalysis depends on residues aspartate 364 and histidine 366. The tract at residues 448–467 (NYGFADDDSEDEREDDWQML) is disordered. The segment covering 452–467 (ADDDSEDEREDDWQML) has biased composition (acidic residues).

This sequence belongs to the peptidase C54 family. In terms of assembly, interacts with ATG8. As to expression, constitutively expressed.

The protein resides in the cytoplasm. The enzyme catalyses [protein]-C-terminal L-amino acid-glycyl-phosphatidylethanolamide + H2O = [protein]-C-terminal L-amino acid-glycine + a 1,2-diacyl-sn-glycero-3-phosphoethanolamine. Functionally, cysteine protease that plays a key role in autophagy by mediating both proteolytic activation and delipidation of ATG8 family proteins. The protease activity is required for proteolytic activation of ATG8 family proteins: cleaves the C-terminal amino acid of ATG8 proteins to reveal a C-terminal glycine. Exposure of the glycine at the C-terminus is essential for ATG8 proteins conjugation to phosphatidylethanolamine (PE) and insertion to membranes, which is necessary for autophagy. In addition to the protease activity, also mediates delipidation of PE-conjugated ATG8 proteins. This Arabidopsis thaliana (Mouse-ear cress) protein is Cysteine protease ATG4a.